The primary structure comprises 158 residues: Protein EOLA1 (158 aa).

The ASCH domain maps to 6–92; it reads LSFRQPYAGF…IAGLVDIGET (87 aa).

The protein belongs to the EOLA family. Interacts with MT2A. As to expression, expressed primarily in heart, skeletal muscle, kidney, liver and placenta. Relatively high level of expression in spleen, colon and small intestine. Almost no expression in brain, thymus, lung and peripheral blood leukocytes. Expressed in epithelial cells (at protein level).

In terms of biological role, may play a role in cell protection during the inflammatory response. In epithelial cells, negatively regulates IL6 production and apoptosis through the regulation of MT2A expression. The chain is Protein EOLA1 from Homo sapiens (Human).